Reading from the N-terminus, the 417-residue chain is NADH-quinone oxidoreductase subunit D (417 aa).

This sequence belongs to the complex I 49 kDa subunit family. NDH-1 is composed of 14 different subunits. Subunits NuoB, C, D, E, F, and G constitute the peripheral sector of the complex.

It is found in the cell inner membrane. The enzyme catalyses a quinone + NADH + 5 H(+)(in) = a quinol + NAD(+) + 4 H(+)(out). NDH-1 shuttles electrons from NADH, via FMN and iron-sulfur (Fe-S) centers, to quinones in the respiratory chain. The immediate electron acceptor for the enzyme in this species is believed to be ubiquinone. Couples the redox reaction to proton translocation (for every two electrons transferred, four hydrogen ions are translocated across the cytoplasmic membrane), and thus conserves the redox energy in a proton gradient. The protein is NADH-quinone oxidoreductase subunit D of Burkholderia orbicola (strain MC0-3).